The chain runs to 704 residues: Elongation factor G (704 aa).

Positions 8–291 constitute a tr-type G domain; that stretch reads DKVRNIGIMA…AVVEYLASPV (284 aa). GTP-binding positions include 17–24, 90–94, and 144–147; these read AHIDAGKT, DTPGH, and NKMD.

It belongs to the TRAFAC class translation factor GTPase superfamily. Classic translation factor GTPase family. EF-G/EF-2 subfamily.

It localises to the cytoplasm. In terms of biological role, catalyzes the GTP-dependent ribosomal translocation step during translation elongation. During this step, the ribosome changes from the pre-translocational (PRE) to the post-translocational (POST) state as the newly formed A-site-bound peptidyl-tRNA and P-site-bound deacylated tRNA move to the P and E sites, respectively. Catalyzes the coordinated movement of the two tRNA molecules, the mRNA and conformational changes in the ribosome. In Chlorobium phaeobacteroides (strain DSM 266 / SMG 266 / 2430), this protein is Elongation factor G.